The chain runs to 234 residues: MKFDPPLQSATLIKRYKRFLTDIELPDGEIRTIHCANTGAMTGCAEPGNTVWFSTSENKKRKYPNSWELAETANGHWICVNTAQANRLVVEAINAGTITELQGYSSLRTEVKYGSENSRIDILLEDKNKPVCYIEVKSVTLLDNGQGFFPDAVTTRGQKHLRELIEVAQNGQRSVLFFAILHSGIENVSAAHHIDPDYYRLIKQAEQAGVEIICYKATLNQDEIKLNHCMNFNQ.

It belongs to the SfsA family.

The protein is Sugar fermentation stimulation protein homolog of Photobacterium profundum (strain SS9).